The primary structure comprises 283 residues: Glutamate racemase (283 aa).

Residues 28–29 (DS) and 60–61 (YG) each bind substrate. The Proton donor/acceptor role is filled by Cys92. 93–94 (NT) provides a ligand contact to substrate. Cys204 functions as the Proton donor/acceptor in the catalytic mechanism. Position 205–206 (205–206 (TH)) interacts with substrate.

It belongs to the aspartate/glutamate racemases family.

The catalysed reaction is L-glutamate = D-glutamate. Its pathway is cell wall biogenesis; peptidoglycan biosynthesis. Provides the (R)-glutamate required for cell wall biosynthesis. The polypeptide is Glutamate racemase (Salmonella enteritidis PT4 (strain P125109)).